Consider the following 22-residue polypeptide: uncharacterized protein (22 aa).

A helical membrane pass occupies residues 3–22 (MFITGYDINQKQKKRYGLRG).

Belongs to the asfivirus C84L family.

The protein resides in the host membrane. This is an uncharacterized protein from Ornithodoros (relapsing fever ticks).